A 350-amino-acid chain; its full sequence is tRNA uridine(34) hydroxylase (350 aa).

Residues 146-240 (DDPDALFIDM…YARKAREQGL (95 aa)) enclose the Rhodanese domain. The active-site Cysteine persulfide intermediate is Cys200.

This sequence belongs to the TrhO family.

It catalyses the reaction uridine(34) in tRNA + AH2 + O2 = 5-hydroxyuridine(34) in tRNA + A + H2O. Catalyzes oxygen-dependent 5-hydroxyuridine (ho5U) modification at position 34 in tRNAs, the first step in 5-carboxymethoxyuridine (cmo5U) biosynthesis. May be part of an alternate pathway, which is able to bypass cmo5U biogenesis in a subset of tRNAs under aerobic conditions. The protein is tRNA uridine(34) hydroxylase of Escherichia coli O9:H4 (strain HS).